Reading from the N-terminus, the 213-residue chain is Na(+)-translocating NADH-quinone reductase subunit E (213 aa).

The next 6 membrane-spanning stretches (helical) occupy residues 12–32 (AVFV…FLAV), 40–60 (IGLG…NQLI), 92–112 (FLGF…LEMF), 124–144 (LGIF…SLFM), 155–175 (VVFG…LAGI), and 191–211 (LGIT…FSGI).

It belongs to the NqrDE/RnfAE family. In terms of assembly, composed of six subunits; NqrA, NqrB, NqrC, NqrD, NqrE and NqrF.

The protein resides in the cell inner membrane. The enzyme catalyses a ubiquinone + n Na(+)(in) + NADH + H(+) = a ubiquinol + n Na(+)(out) + NAD(+). NQR complex catalyzes the reduction of ubiquinone-1 to ubiquinol by two successive reactions, coupled with the transport of Na(+) ions from the cytoplasm to the periplasm. NqrA to NqrE are probably involved in the second step, the conversion of ubisemiquinone to ubiquinol. This Rhodopirellula baltica (strain DSM 10527 / NCIMB 13988 / SH1) protein is Na(+)-translocating NADH-quinone reductase subunit E.